The following is a 571-amino-acid chain: Proline--tRNA ligase (571 aa).

The protein belongs to the class-II aminoacyl-tRNA synthetase family. ProS type 1 subfamily. In terms of assembly, homodimer.

Its subcellular location is the cytoplasm. It catalyses the reaction tRNA(Pro) + L-proline + ATP = L-prolyl-tRNA(Pro) + AMP + diphosphate. Its function is as follows. Catalyzes the attachment of proline to tRNA(Pro) in a two-step reaction: proline is first activated by ATP to form Pro-AMP and then transferred to the acceptor end of tRNA(Pro). As ProRS can inadvertently accommodate and process non-cognate amino acids such as alanine and cysteine, to avoid such errors it has two additional distinct editing activities against alanine. One activity is designated as 'pretransfer' editing and involves the tRNA(Pro)-independent hydrolysis of activated Ala-AMP. The other activity is designated 'posttransfer' editing and involves deacylation of mischarged Ala-tRNA(Pro). The misacylated Cys-tRNA(Pro) is not edited by ProRS. The chain is Proline--tRNA ligase from Buchnera aphidicola subsp. Schizaphis graminum (strain Sg).